Consider the following 289-residue polypeptide: MVGVKPVGSDPDFQPELSGAGSRLAVVKFTMRGCGPCLRIAPAFSSMSNKYPQAVFLEVDVHQCQGTAATNNISATPTFLFFRNKVRIDQYQGADAVGLEEKIKQHLENDPGSNEDTDIPKGYMDLMPFINKAGCECLNESDEHGFDNCLRKDTTFLESDCDEQLLITVAFNQPVKLYSMKFQGPDNGQGPKYVKIFINLPRSMDFEEAERSEPTQALELTEDDIKEDGIVPLRYVKFQNVNSVTIFVQSNQGEEETTRISYFTFIGTPVQATNMNDFKRVVGKKGESH.

Residues 2 to 109 (VGVKPVGSDP…EEKIKQHLEN (108 aa)) form the Thioredoxin domain. The cysteines at positions 34 and 37 are disulfide-linked. Serine 113 carries the phosphoserine modification. Residues 115 to 285 (EDTDIPKGYM…NDFKRVVGKK (171 aa)) form the PITH domain.

In terms of assembly, component of the 19S regulatory cap of the 26S proteasome. Interacts with PSMD14/RPN11. Interacts with, and reduces EEF1A1. As to expression, ubiquitous.

The protein resides in the cytoplasm. Its subcellular location is the nucleus. Its function is as follows. Active thioredoxin with a redox potential of about -250 mV. This Homo sapiens (Human) protein is Thioredoxin-like protein 1 (TXNL1).